Reading from the N-terminus, the 472-residue chain is Uronate isomerase (472 aa).

Belongs to the metallo-dependent hydrolases superfamily. Uronate isomerase family.

It catalyses the reaction D-glucuronate = D-fructuronate. The catalysed reaction is aldehydo-D-galacturonate = keto-D-tagaturonate. The protein operates within carbohydrate metabolism; pentose and glucuronate interconversion. In Halalkalibacterium halodurans (strain ATCC BAA-125 / DSM 18197 / FERM 7344 / JCM 9153 / C-125) (Bacillus halodurans), this protein is Uronate isomerase.